The primary structure comprises 348 residues: Photosystem II protein D1 (348 aa).

Transmembrane regions (helical) follow at residues 33 to 50 (YIGW…LATV), 122 to 137 (HFIL…EWEF), and 146 to 160 (WIFV…AASA). His122 serves as a coordination point for chlorophyll a. Residue Tyr130 coordinates pheophytin a. Positions 174 and 193 each coordinate [CaMn4O5] cluster. A helical transmembrane segment spans residues 201–222 (FHILGVAAVFGGSLFSAMHGSL). His202 serves as a coordination point for chlorophyll a. A quinone-binding positions include His219 and 268 to 269 (SF). His219 is a Fe cation binding site. His276 contributes to the Fe cation binding site. A helical membrane pass occupies residues 278-292 (FLAAWPVIGIWFTAL). The [CaMn4O5] cluster site is built by His336, Glu337, Asp346, and Ala348.

Belongs to the reaction center PufL/M/PsbA/D family. PSII is composed of 1 copy each of membrane proteins PsbA, PsbB, PsbC, PsbD, PsbE, PsbF, PsbH, PsbI, PsbJ, PsbK, PsbL, PsbM, PsbT, PsbX, PsbY, PsbZ, Psb30/Ycf12, at least 3 peripheral proteins of the oxygen-evolving complex and a large number of cofactors. It forms dimeric complexes. The D1/D2 heterodimer binds P680, chlorophylls that are the primary electron donor of PSII, and subsequent electron acceptors. It shares a non-heme iron and each subunit binds pheophytin, quinone, additional chlorophylls, carotenoids and lipids. D1 provides most of the ligands for the Mn4-Ca-O5 cluster of the oxygen-evolving complex (OEC). There is also a Cl(-1) ion associated with D1 and D2, which is required for oxygen evolution. The PSII complex binds additional chlorophylls, carotenoids and specific lipids. serves as cofactor. In terms of processing, tyr-165 forms a radical intermediate that is referred to as redox-active TyrZ, YZ or Y-Z.

Its subcellular location is the plastid. It is found in the chloroplast thylakoid membrane. The enzyme catalyses 2 a plastoquinone + 4 hnu + 2 H2O = 2 a plastoquinol + O2. Its function is as follows. Photosystem II (PSII) is a light-driven water:plastoquinone oxidoreductase that uses light energy to abstract electrons from H(2)O, generating O(2) and a proton gradient subsequently used for ATP formation. It consists of a core antenna complex that captures photons, and an electron transfer chain that converts photonic excitation into a charge separation. The D1/D2 (PsbA/PsbD) reaction center heterodimer binds P680, the primary electron donor of PSII as well as several subsequent electron acceptors. In Heterocapsa pygmaea (Dinoflagellate), this protein is Photosystem II protein D1.